A 380-amino-acid chain; its full sequence is Hydrogenase maturation factor HypD2 (380 aa).

Fe cation-binding residues include C36, C64, and C67.

The protein belongs to the HypD family. [4Fe-4S] cluster serves as cofactor.

It functions in the pathway protein modification; [NiFe] hydrogenase maturation. Involved in the maturation of [NiFe] hydrogenases. Involved in the biosynthesis of the Fe(CN)(2)CO cofactor. In Bradyrhizobium diazoefficiens (strain JCM 10833 / BCRC 13528 / IAM 13628 / NBRC 14792 / USDA 110), this protein is Hydrogenase maturation factor HypD2 (hypD2).